The sequence spans 523 residues: GMP synthase [glutamine-hydrolyzing] (523 aa).

Positions 8–205 (KILILDFGSQ…VVGICGCECK (198 aa)) constitute a Glutamine amidotransferase type-1 domain. Residue cysteine 85 is the Nucleophile of the active site. Active-site residues include histidine 179 and glutamate 181. The GMPS ATP-PPase domain maps to 206–398 (WTAENIIERR…LGLPAEMLNR (193 aa)). Position 233-239 (233-239 (SGGVDSS)) interacts with ATP.

As to quaternary structure, homodimer.

It carries out the reaction XMP + L-glutamine + ATP + H2O = GMP + L-glutamate + AMP + diphosphate + 2 H(+). The protein operates within purine metabolism; GMP biosynthesis; GMP from XMP (L-Gln route): step 1/1. Its function is as follows. Catalyzes the synthesis of GMP from XMP. This Actinobacillus pleuropneumoniae serotype 5b (strain L20) protein is GMP synthase [glutamine-hydrolyzing].